A 67-amino-acid polypeptide reads, in one-letter code: MPKLKNHSGAKKRFAKTATGKYKRRKAGRKHLLTPQSGSRKREMRQTGIIKPESAEGKLLKKYLPMD.

Positions 1-32 are enriched in basic residues; it reads MPKLKNHSGAKKRFAKTATGKYKRRKAGRKHL. The disordered stretch occupies residues 1–54; it reads MPKLKNHSGAKKRFAKTATGKYKRRKAGRKHLLTPQSGSRKREMRQTGIIKPES.

Belongs to the bacterial ribosomal protein bL35 family.

This is Large ribosomal subunit protein bL35 from Elusimicrobium minutum (strain Pei191).